The chain runs to 79 residues: Translational regulator CsrA (79 aa).

Belongs to the CsrA/RsmA family. As to quaternary structure, homodimer; the beta-strands of each monomer intercalate to form a hydrophobic core, while the alpha-helices form wings that extend away from the core.

Its subcellular location is the cytoplasm. Its function is as follows. A translational regulator that binds mRNA to regulate translation initiation and/or mRNA stability. Usually binds in the 5'-UTR at or near the Shine-Dalgarno sequence preventing ribosome-binding, thus repressing translation. Its main target seems to be the major flagellin gene, while its function is anatagonized by FliW. This Geotalea uraniireducens (strain Rf4) (Geobacter uraniireducens) protein is Translational regulator CsrA.